We begin with the raw amino-acid sequence, 325 residues long: Ferrochelatase (325 aa).

Residues His-195 and Glu-276 each coordinate Fe cation.

This sequence belongs to the ferrochelatase family.

The protein localises to the cytoplasm. The enzyme catalyses heme b + 2 H(+) = protoporphyrin IX + Fe(2+). Its pathway is porphyrin-containing compound metabolism; protoheme biosynthesis; protoheme from protoporphyrin-IX: step 1/1. Its function is as follows. Catalyzes the ferrous insertion into protoporphyrin IX. The sequence is that of Ferrochelatase from Methylococcus capsulatus (strain ATCC 33009 / NCIMB 11132 / Bath).